Consider the following 479-residue polypeptide: MDPPTQSHNSVRTVPGSNHSHTDLIISSFLSFPDSSPISISNSFDRVLDRALASASADESVQDRLVDRTLELASLLLDSTRRCFRKRASVHNSNSWSLPPELTIKVFSMLDTKSMMQAAVCCTMFNKCAMDRLCYSHIDLTTSARYADKGVVSTMINRAGKELRSLKLGRVVRTAGSDSAAPLLSGSCLSPLAYNHGFLGSRLRSLRLYNLRPIKYRSLCDALSVCPNITDLRIVGLYNLTEELFNSLTKKCRLIEHLFLETYGYPRTLESKAGSSLVEFVTNCPNLTSLTLIRFGLTDDWARNLAESCRKLKYLNLSRSPTIKGRFLRELGLSCKENLLKTLILRSCPKLQEKEVLEFCNSLLTGNFKSIRQIDVSSNSGLASSDRGKRCNKPNFPLERLKEERSDVTFVADFPSTSSGKRYGVCDEEELRLIEMMEAEDDEVDEEDDSDDDTDDVSDEDESENDDDMGMGFDVDYLL.

The F-box domain maps to 92–138 (NSNSWSLPPELTIKVFSMLDTKSMMQAAVCCTMFNKCAMDRLCYSHI). Residues 435–479 (EMMEAEDDEVDEEDDSDDDTDDVSDEDESENDDDMGMGFDVDYLL) form a disordered region. Residues 437-469 (MEAEDDEVDEEDDSDDDTDDVSDEDESENDDDM) are compositionally biased toward acidic residues.

As to quaternary structure, part of a SCF (ASK-cullin-F-box) protein ligase complex. Interacts with SPK1B/ASK2.

The protein localises to the nucleus. The protein operates within protein modification; protein ubiquitination. Its function is as follows. Component of SCF(ASK-cullin-F-box) E3 ubiquitin ligase complexes, which may mediate the ubiquitination and subsequent proteasomal degradation of target proteins. In Arabidopsis thaliana (Mouse-ear cress), this protein is F-box protein SKIP17 (SKIP17).